The chain runs to 1522 residues: Histone-lysine N-methyltransferase EZH2 (1522 aa).

The tract at residues 1-196 is disordered; that stretch reads MSPARGDANA…PKTPTPKNTE (196 aa). Residues 39–61 show a composition bias toward basic and acidic residues; that stretch reads NRENLRDRDRADKLEKLEKDAHA. 2 stretches are compositionally biased toward low complexity: residues 64–76 and 103–130; these read QTQT…PVTV and RGST…SPSL. Over residues 141–162 the composition is skewed to polar residues; the sequence is ILASRTSRFSNRTGIRDSQSPS. Residues 180-195 are compositionally biased toward low complexity; the sequence is ATSNTPAPKTPTPKNT. Residues 190–220 are SBD domain; sequence PTPKNTEWTVDKIASALSVLAEEVPQNHSRL. Positions 221-250 are EBD domain; the sequence is VNFLLEETEKRAPQPRHLSKTDPFAHMKSK. The segment at 251–300 is BAM domain; the sequence is AIDANRPRPEGVPTMDVKFKQHSGEYGKSRNSGRRFQYPVVCIKPDREPV. The segment at 301–320 is SAL domain; the sequence is PPYRFHHAEIRKNILALNSQ. Residues 321-360 are SRM domain; that stretch reads LNFVPHLRDVDPNSAEEQKYSAWLMDLENLDSKSGFKIQP. Residues 361-480 are SANT1L domain; the sequence is RSQKIAKRAQ…PIFDNKRAKD (120 aa). Residues 406-426 are disordered; sequence PESDDSMTPQQKSNLLDTYSD. Over residues 411–422 the composition is skewed to polar residues; sequence SMTPQQKSNLLD. Residues 481–560 form an MCSS domain region; it reads APGSQKPPDE…EQRQKTEGGS (80 aa). Zn(2+) is bound by residues cysteine 508, cysteine 511, cysteine 516, histidine 518, cysteine 570, cysteine 574, cysteine 615, cysteine 625, cysteine 685, histidine 687, cysteine 691, cysteine 697, cysteine 699, cysteine 709, cysteine 713, cysteine 715, cysteine 720, cysteine 727, cysteine 729, cysteine 736, cysteine 746, cysteine 748, cysteine 755, cysteine 760, cysteine 763, and cysteine 784. Residues 561–650 are SANT2L domain; that stretch reads ANAPPAHPPC…PVEPRTIPKQ (90 aa). The CXC domain occupies 658–780; the sequence is RRKKQLMSDW…PENAYDEVLH (123 aa). An SET domain is found at 795 to 919; sequence KAVVLGKSQL…AGEELFFNYG (125 aa). Positions 809, 852, 854, and 855 each coordinate S-adenosyl-L-homocysteine. Residues tyrosine 809, lysine 852, serine 854, tyrosine 855, asparagine 880, histidine 881, and threonine 926 each coordinate S-adenosyl-L-methionine. Histidine 881 is an S-adenosyl-L-homocysteine binding site. Residue lysine 927 participates in S-adenosyl-L-homocysteine binding. A disordered region spans residues 933–1522; the sequence is NEQSGAETTP…KPARYRDEGE (590 aa). The segment covering 935–946 has biased composition (polar residues); the sequence is QSGAETTPQQPK. A compositionally biased stretch (acidic residues) spans 971–988; sequence GFDDDDRDGNDSDPDDLW. Residues 992-1024 show a composition bias toward low complexity; the sequence is QQQQQQQQQQQQQQQQQQQQQQQQQQQQQQQQQ. Polar residues predominate over residues 1025 to 1038; it reads AQKPQPSTSHQPQS. Residues 1053–1066 are compositionally biased toward basic and acidic residues; sequence SPDKQLRRENHDAQ. Over residues 1072–1091 the composition is skewed to low complexity; the sequence is QFQQQEQQQQQQQQQQQQQQ. A compositionally biased stretch (polar residues) spans 1127–1136; that stretch reads DSSSGGSANE. A compositionally biased stretch (basic residues) spans 1142-1162; the sequence is KPSRRGGARPGAGRKPKHRPP. 2 stretches are compositionally biased toward basic and acidic residues: residues 1207-1221 and 1228-1238; these read SDSK…TDKE and VNEKDREKGRD. The segment covering 1255–1299 has biased composition (low complexity); it reads KSAPSPAKKQASSPTKISDSNRTTSKNTSSNNNNNTNNNNNNNNN. A compositionally biased stretch (polar residues) spans 1316–1330; that stretch reads HLTNSQPAALSPSAT. Composition is skewed to low complexity over residues 1355–1385 and 1415–1428; these read STMT…SSSS and SSSL…SVFS. Positions 1455-1464 are enriched in polar residues; the sequence is SGLNSTSLSQ. Residues 1465 to 1494 are compositionally biased toward basic and acidic residues; it reads ERGEKHEKHEKEKPKEKKGEKERERERDRS.

Belongs to the class V-like SAM-binding methyltransferase superfamily. Histone-lysine methyltransferase family. EZ subfamily. Component of the polycomb repressive complex 2 (PRC2) that consists of four core subunits icluding EZH2, EED, SUZ12, and RBBP4, among which EZH2 is the catalytic subunit and which minimally requires EED and SUZ12 for catalysis.

It is found in the nucleus. It carries out the reaction L-lysyl(27)-[histone H3] + 3 S-adenosyl-L-methionine = N(6),N(6),N(6)-trimethyl-L-lysyl(27)-[histone H3] + 3 S-adenosyl-L-homocysteine + 3 H(+). Its activity is regulated as follows. The end product of PRC2 catalysis, H3K27me3, interacts with EED to stimulate the enzymatic activity of PRC2 allosterically. The enzymatic activity of PRC2 is regulated in a very complex manner and PCR2 can adopt different stages including the autoinhibited (A); SAM-bound autoinhibited (A'), basal (B), and H3K27me3-stimulated (S) stages. Actictivity is inhibited by pyridone inhibitors such as GSK126. Functionally, catalytic subunit of the of the Polycomb Repressive Complex 2 (PRC2), a histone H3 lysine methyltransferase responsible for generating mono-, di-, and tri-methylation on Lys27 (H3K27me1, H3K27me2 and H3K27me3). The tri-methylated form is known to be critical in gene repression, and its proper placement is essential in defining repression patterns during development. The PRC2 complex interacts with thousands of RNA species in vivo, but the physiological function of RNA binding has still to be determined. The polypeptide is Histone-lysine N-methyltransferase EZH2 (Chaetomium thermophilum (strain DSM 1495 / CBS 144.50 / IMI 039719) (Thermochaetoides thermophila)).